Consider the following 392-residue polypeptide: Homoserine O-acetyltransferase (392 aa).

The AB hydrolase-1 domain maps to 52-356; the sequence is NVVVVLHALT…ICGHDGFLVE (305 aa). Residue Ser-157 is the Nucleophile of the active site. Substrate is bound at residue Arg-227. Active-site residues include Asp-320 and His-350. Asp-351 contacts substrate. Positions 373–392 are disordered; the sequence is SQSAGPGGAGPGSRKGTTRR.

It belongs to the AB hydrolase superfamily. MetX family. In terms of assembly, homodimer.

The protein localises to the cytoplasm. It catalyses the reaction L-homoserine + acetyl-CoA = O-acetyl-L-homoserine + CoA. The protein operates within amino-acid biosynthesis; L-methionine biosynthesis via de novo pathway; O-acetyl-L-homoserine from L-homoserine: step 1/1. Its function is as follows. Transfers an acetyl group from acetyl-CoA to L-homoserine, forming acetyl-L-homoserine. The polypeptide is Homoserine O-acetyltransferase (Mycobacterium avium (strain 104)).